The following is a 272-amino-acid chain: Probable proteasome subunit alpha type-6 (272 aa).

The segment covering 243-261 (AARASRAAAEEPQAPTAEA) has biased composition (low complexity). The tract at residues 243 to 272 (AARASRAAAEEPQAPTAEAILDSADAMETD) is disordered.

This sequence belongs to the peptidase T1A family. In terms of assembly, the 26S proteasome consists of a 20S proteasome core and two 19S regulatory subunits. The 20S proteasome core is composed of 28 subunits that are arranged in four stacked rings, resulting in a barrel-shaped structure. The two end rings are each formed by seven alpha subunits, and the two central rings are each formed by seven beta subunits. The catalytic chamber with the active sites is on the inside of the barrel.

It localises to the cytoplasm. Its subcellular location is the nucleus. Functionally, the proteasome is a multicatalytic proteinase complex which is characterized by its ability to cleave peptides with Arg, Phe, Tyr, Leu, and Glu adjacent to the leaving group at neutral or slightly basic pH. The proteasome has an ATP-dependent proteolytic activity. In Schizosaccharomyces pombe (strain 972 / ATCC 24843) (Fission yeast), this protein is Probable proteasome subunit alpha type-6.